The following is a 917-amino-acid chain: Isoleucine--tRNA ligase (917 aa).

A 'HIGH' region motif is present at residues 59–69 (PYANGHIHIGH). L-isoleucyl-5'-AMP is bound at residue Glu569. A 'KMSKS' region motif is present at residues 610-614 (KMSKS). Residue Lys613 coordinates ATP. Positions 890, 893, 905, and 908 each coordinate Zn(2+).

Belongs to the class-I aminoacyl-tRNA synthetase family. IleS type 1 subfamily. In terms of assembly, monomer. It depends on Zn(2+) as a cofactor.

The protein resides in the cytoplasm. The enzyme catalyses tRNA(Ile) + L-isoleucine + ATP = L-isoleucyl-tRNA(Ile) + AMP + diphosphate. Catalyzes the attachment of isoleucine to tRNA(Ile). As IleRS can inadvertently accommodate and process structurally similar amino acids such as valine, to avoid such errors it has two additional distinct tRNA(Ile)-dependent editing activities. One activity is designated as 'pretransfer' editing and involves the hydrolysis of activated Val-AMP. The other activity is designated 'posttransfer' editing and involves deacylation of mischarged Val-tRNA(Ile). The polypeptide is Isoleucine--tRNA ligase (Campylobacter jejuni subsp. jejuni serotype O:2 (strain ATCC 700819 / NCTC 11168)).